Consider the following 481-residue polypeptide: Phloretin 4'-O-glucosyltransferase (481 aa).

The active-site Proton acceptor is the H16. Position 16 (H16) interacts with an anthocyanidin. The UDP-alpha-D-glucose site is built by Q354, H369, W372, N373, S374, E377, D393, and Q394.

Belongs to the UDP-glycosyltransferase family. As to expression, highly expressed in young leaves, at intermediate level in mature leaves and at low levels in flowers and fruits.

The enzyme catalyses phloretin + UDP-alpha-D-glucose = trilobatin + UDP + H(+). It catalyses the reaction (2S)-naringenin + UDP-alpha-D-glucose = (2S)-naringenin 7-O-beta-D-glucoside + UDP + H(+). Its function is as follows. Glycosyltransferase that possesses phloretin 4'-O-glycosyltransferase activity. Converts phloretin to trilobatin (phloretin 4'-O-glucoside), a potential antioxidant. Can convert with low efficiency phlorizin and trilobatin to their corresponding di-O-glucosides. Can convert with low efficiency naringenin to naringenin-7-O-glucoside. Can convert with low efficiency quercetin to quercetin-7-O-glucoside. The polypeptide is Phloretin 4'-O-glucosyltransferase (Malus domestica (Apple)).